The primary structure comprises 357 residues: Ubiquitin carboxyl-terminal hydrolase 2 (357 aa).

One can recognise a USP domain in the interval 19-351 (TGLRNLGNTC…DAYLLFYELA (333 aa)). Cysteine 28 acts as the Nucleophile in catalysis. The Zn(2+) site is built by cysteine 177, cysteine 180, cysteine 228, and cysteine 231. Histidine 309 functions as the Proton acceptor in the catalytic mechanism.

The protein belongs to the peptidase C19 family. USP2 subfamily. As to quaternary structure, homooligomer.

It is found in the cytoplasm. It localises to the perinuclear region. The enzyme catalyses Thiol-dependent hydrolysis of ester, thioester, amide, peptide and isopeptide bonds formed by the C-terminal Gly of ubiquitin (a 76-residue protein attached to proteins as an intracellular targeting signal).. In terms of biological role, hydrolase that deubiquitinates polyubiquitinated target proteins such as MDM2, MDM4 and CCND1. Possesses both ubiquitin-specific peptidase and isopeptidase activities. May play a role in the regulation of the circadian clock. This is Ubiquitin carboxyl-terminal hydrolase 2 (USP2) from Gallus gallus (Chicken).